The chain runs to 281 residues: Putative dehydrogenase/reductase SDR family member 4-like 1 (281 aa).

36-60 serves as a coordination point for NADP(+); that stretch reads LVTASTDWIGFAVAQRLAQDGAHVV. Serine 172 contacts substrate. Tyrosine 185 functions as the Proton acceptor in the catalytic mechanism. Lysine 189 serves as a coordination point for NADP(+). The Peroxisomal targeting signal signature appears at 279 to 281; the sequence is SRL.

The protein belongs to the short-chain dehydrogenases/reductases (SDR) family.

In terms of biological role, putative oxidoreductase. This is Putative dehydrogenase/reductase SDR family member 4-like 1 from Homo sapiens (Human).